Consider the following 447-residue polypeptide: FAD-dependent monooxygenase tropB (447 aa).

A helical transmembrane segment spans residues 12 to 32 (PLSVGIVGGGIIGVILAAGLV). Residues Glu-42, Ala-55, and Arg-124 each contribute to the FAD site. The N-linked (GlcNAc...) asparagine glycan is linked to Asn-153. Active-site residues include Arg-206 and Tyr-239. Asn-243 carries an N-linked (GlcNAc...) asparagine glycan. Residues Asp-322 and Ala-335 each contribute to the FAD site.

The protein belongs to the paxM FAD-dependent monooxygenase family. FAD is required as a cofactor.

It is found in the membrane. It functions in the pathway secondary metabolite biosynthesis. Functionally, FAD-dependent monooxygenase; part of the gene cluster that mediates the biosynthesis of the tropolone class of fungal maleic anhydrides. Within the pathway, tropB catalyzes a synthetically challenging asymmetric oxidative dearomatization reaction to convert 3-methylorcinaldehyde into a hydroxycyclohexadione. The pathway begins with the synthesis of 3-methylorcinaldehyde by the non-reducing polyketide synthase (PKS) tropA. 3-methylorcinaldehyde is the substrate for the FAD-dependent monooxygenase tropB to yield a dearomatized hydroxycyclohexadione. The 2-oxoglutarate-dependent dioxygenase tropC then performs the oxidative ring expansion to provide the first tropolone metabolite stipitaldehyde. Trop D converts stipitaldehyde into stipitacetal which is in turn converted to stipitalide by the short-chain dehydrogenase/reductase tropE. The next steps involve tropF, tropG, tropH, tropI and tropJ to form successive tropolone maleic anhydrides including stipitaldehydic, stipitatonic and stipitatic acids. The protein is FAD-dependent monooxygenase tropB of Talaromyces stipitatus (strain ATCC 10500 / CBS 375.48 / QM 6759 / NRRL 1006) (Penicillium stipitatum).